The following is a 154-amino-acid chain: Homeobox protein engrailed (154 aa).

Residues 37–96 constitute a DNA-binding region (homeobox); that stretch reads EKRPRTAFSASQLQRLKQEFQQSNYLTEQRRRSLAKELTLSESQIKIWFQNKRAKIKKAS. The interval 127 to 154 is disordered; that stretch reads KLLNGQNTSGDCSRSDYTSDSDGDSLTH. The span at 129-144 shows a compositional bias: polar residues; the sequence is LNGQNTSGDCSRSDYT. Acidic residues predominate over residues 145 to 154; sequence SDSDGDSLTH.

Belongs to the engrailed homeobox family.

The protein localises to the nucleus. The polypeptide is Homeobox protein engrailed (EN) (Tripneustes gratilla (Hawaian sea urchin)).